The following is a 951-amino-acid chain: Serine/threonine-protein phosphatase 4 regulatory subunit 1 (951 aa).

HEAT repeat units follow at residues 26–63 (ESDVIIIPSALDFVSQDEMLTPLGRLDKYAASENVFNR), 65–81 (MVARSLLDTLREVCDDE), 82–119 (RDCIAVLERISRLADDSEPTVRAELMEQVPHIALFCQE), 127–164 (AFSKYLLPIVVRYLADQNNQVRKTSQAALLALLEQELI), 168–206 (DVETKVCPVLIDLTAPDSNDDVKTEAVAIMCKMAPMVGK), 208–246 (ITERLILPRFCEMCCDCRMFHVRKVCAANFGDICSVVGQ), 248–285 (ATEEMLLPRFFQLCSDNVWGVRKACAECFMAVSCATCQ), and 287–324 (IRRTKLSALFINLISDPSRWVRQAAFQSLGPFISTFAN). Disordered stretches follow at residues 325 to 377 (PSSS…HSSA), 411 to 451 (SESP…PLDQ), and 474 to 499 (QQDPEERLSPERTGDVPAAPLPGPPN). Basic and acidic residues predominate over residues 332–365 (FKDESKSSEDSSAEDKDRMRDNDVVEEEHRRPED). Composition is skewed to polar residues over residues 411-421 (SESPQEAASND) and 430-445 (NSKSASRPDAGTSSPE). Basic and acidic residues predominate over residues 474–487 (QQDPEERLSPERTG). An HEAT 9 repeat occupies 506–543 (KELEEMIENLEPHMDDPDVKAQVDVLSAALRASSLDAH). A disordered region spans residues 590–612 (DYVHGGADVSPGDGFSPDEDRRP). 3 HEAT repeats span residues 699-735 (LTAADLVPIFNGFLKDLDEVRIGVLKHLHDFLKLLHI), 800-838 (WISYKLVSEMVKKLHTATPPTFGVDLINELVENFGRCPK), and 862-899 (QFAVHLMPHLLTLANDRVPNVRVLLAKTLRQTLLEKEY). Residue Ser936 is modified to Phosphoserine.

As to quaternary structure, serine/threonine-protein phosphatase 4 (PP4) occurs in different assemblies of the catalytic and one or more regulatory subunits. Component of the PP4 complex PPP4C-PPP4R1. Interacts with HDAC3.

In terms of biological role, regulatory subunit of serine/threonine-protein phosphatase 4. May play a role in regulation of cell division in renal glomeruli. The PPP4C-PPP4R1 PP4 complex may play a role in dephosphorylation and regulation of HDAC3. Plays a role in the inhibition of TNF-induced NF-kappa-B activation by regulating the dephosphorylation of TRAF2. This is Serine/threonine-protein phosphatase 4 regulatory subunit 1 (Ppp4r1) from Mus musculus (Mouse).